We begin with the raw amino-acid sequence, 259 residues long: MFFVLSPAKNLNEKDPAPVSEFTQPDLLAESDILMQQLRELAPQQIAELMHVSDKIALLNAQRNAEWNTPFTPENAKQAVFMFNGDVYEGMDANTLDIGQIRYLQNHVRLLSGLYGLLRPLDLIQPYRLEMGTAFANLRGKNLYEFWGDIITNLLNDTLAQAGSNTLVNLASQEYFKSVNTKKLRARLITPIFKDEKNGKYKIISFYAKRTRGLMVRYAAEHNITDPEMLKNFNYEGYVFNDAASNESEWVFMRSEQIK.

This sequence belongs to the UPF0246 family.

In Neisseria meningitidis serogroup C (strain 053442), this protein is UPF0246 protein NMCC_0856.